The chain runs to 285 residues: MNLIDGKALAAKMQAELKVKVDKLKEAGSVPGLAVILVGEDPASQIYVRNKARQATAIGLNSSVVRLPETVSEKELLELIEQYNQSEQWHGILVQLPLPKHISEEKVLLAIDPEKDVDGFHPMNMGRLWAGNPLMIPSTPAGIMEMFREYNVELSGKRAVVIGRSNIVGKPMAQLLMMADATVTIAHSRTKNLRELTKEADILVVAIGRDRMIKADDVKDGAVVIDVGMNRDEDGKLHGDVDFDEVKEVASLITPVPGGVGPMTITMLMEQTVRAATRKMNENSN.

NADP(+)-binding positions include 163 to 165 (GRS) and S188.

It belongs to the tetrahydrofolate dehydrogenase/cyclohydrolase family. Homodimer.

It carries out the reaction (6R)-5,10-methylene-5,6,7,8-tetrahydrofolate + NADP(+) = (6R)-5,10-methenyltetrahydrofolate + NADPH. It catalyses the reaction (6R)-5,10-methenyltetrahydrofolate + H2O = (6R)-10-formyltetrahydrofolate + H(+). It participates in one-carbon metabolism; tetrahydrofolate interconversion. Its function is as follows. Catalyzes the oxidation of 5,10-methylenetetrahydrofolate to 5,10-methenyltetrahydrofolate and then the hydrolysis of 5,10-methenyltetrahydrofolate to 10-formyltetrahydrofolate. This is Bifunctional protein FolD from Lactococcus lactis subsp. cremoris (strain MG1363).